The primary structure comprises 478 residues: uncharacterized protein (478 aa).

The region spanning Met-2–Glu-120 is the RCK N-terminal domain.

This is an uncharacterized protein from Methanocaldococcus jannaschii (strain ATCC 43067 / DSM 2661 / JAL-1 / JCM 10045 / NBRC 100440) (Methanococcus jannaschii).